The sequence spans 236 residues: HTH-type transcriptional regulator SACE_5812 (236 aa).

The region spanning 30-90 (LLTQDKIVSA…LALDAVFGEV (61 aa)) is the HTH tetR-type domain. Positions 53 to 72 (SMRKLADRLQAHATSLYWHV) form a DNA-binding region, H-T-H motif.

In terms of biological role, transcriptional regulator that inhibits erythromycin production. Directly represses the expression of SACE_5813, eryAI (encoding polyketide synthase I) and ermE (encoding rRNA methyltransferase), suggesting its direct regulation of the erythromycin biosynthesis gene cluster. May play an important role in regulating secondary metabolism in actinomycetes. This is HTH-type transcriptional regulator SACE_5812 from Saccharopolyspora erythraea (strain ATCC 11635 / DSM 40517 / JCM 4748 / NBRC 13426 / NCIMB 8594 / NRRL 2338).